We begin with the raw amino-acid sequence, 86 residues long: Small ribosomal subunit protein bS16 (86 aa).

The protein belongs to the bacterial ribosomal protein bS16 family.

This is Small ribosomal subunit protein bS16 from Xylella fastidiosa (strain 9a5c).